The primary structure comprises 136 residues: uncharacterized protein (136 aa).

This sequence belongs to the mimivirus L163/R849 family.

This is an uncharacterized protein from Acanthamoeba polyphaga mimivirus (APMV).